A 593-amino-acid polypeptide reads, in one-letter code: UvrABC system protein C (593 aa).

The 79-residue stretch at T13–V91 folds into the GIY-YIG domain. The UVR domain occupies D202–I237.

The protein belongs to the UvrC family. As to quaternary structure, interacts with UvrB in an incision complex.

It is found in the cytoplasm. In terms of biological role, the UvrABC repair system catalyzes the recognition and processing of DNA lesions. UvrC both incises the 5' and 3' sides of the lesion. The N-terminal half is responsible for the 3' incision and the C-terminal half is responsible for the 5' incision. This chain is UvrABC system protein C, found in Caldicellulosiruptor saccharolyticus (strain ATCC 43494 / DSM 8903 / Tp8T 6331).